The sequence spans 577 residues: Arginine--tRNA ligase (577 aa).

Positions 122 to 132 match the 'HIGH' region motif; the sequence is PNVAKEMHVGH.

It belongs to the class-I aminoacyl-tRNA synthetase family. As to quaternary structure, monomer.

It localises to the cytoplasm. The enzyme catalyses tRNA(Arg) + L-arginine + ATP = L-arginyl-tRNA(Arg) + AMP + diphosphate. This is Arginine--tRNA ligase from Salmonella agona (strain SL483).